A 562-amino-acid chain; its full sequence is Glutamine--tRNA ligase (562 aa).

The 'HIGH' region signature appears at 35 to 45; the sequence is PEPNGYLHIGH. Residues 36 to 38 and 42 to 48 contribute to the ATP site; these read EPN and HIGHAKS. 2 residues coordinate L-glutamine: Asp68 and Tyr213. Residues Thr232 and 264-265 contribute to the ATP site; that span reads RL. A 'KMSKS' region motif is present at residues 271-275; that stretch reads ITSKR.

The protein belongs to the class-I aminoacyl-tRNA synthetase family. As to quaternary structure, monomer.

It is found in the cytoplasm. It carries out the reaction tRNA(Gln) + L-glutamine + ATP = L-glutaminyl-tRNA(Gln) + AMP + diphosphate. This is Glutamine--tRNA ligase from Neisseria gonorrhoeae (strain ATCC 700825 / FA 1090).